The primary structure comprises 70 residues: Large ribosomal subunit protein bL31 (70 aa).

Cysteine 16, cysteine 18, cysteine 37, and cysteine 40 together coordinate Zn(2+).

The protein belongs to the bacterial ribosomal protein bL31 family. Type A subfamily. In terms of assembly, part of the 50S ribosomal subunit. Requires Zn(2+) as cofactor.

Functionally, binds the 23S rRNA. This chain is Large ribosomal subunit protein bL31, found in Shewanella oneidensis (strain ATCC 700550 / JCM 31522 / CIP 106686 / LMG 19005 / NCIMB 14063 / MR-1).